The following is a 352-amino-acid chain: Macrophage-capping protein (352 aa).

Residue Met-1 is modified to N-acetylmethionine. Residues 27 to 75 form a Gelsolin-like 1 repeat; sequence EKLKPVPIARESHGIFFSGDSYLVLHNGPEEASHLHLWIGQQSSRDEQG. A Nuclear localization signal motif is present at residues 139–148; the sequence is RKLYQVKGKK. Gelsolin-like repeat units follow at residues 150–190 and 265–311; these read IRAT…LERN and MNLT…KERQ. Ser-341 carries the post-translational modification Phosphoserine.

Belongs to the villin/gelsolin family. Interacts with NUP62. Interacts with NUTF2 and RAN; involved in CAPG nuclear import. Phosphorylated. Nuclear GCAP39 is more highly phosphorylated than cytoplasmic GCAP39. In terms of tissue distribution, present in a large variety of tissues and is particularly abundant in kidney and lung. Highly expressed in macrophages (at protein level).

The protein localises to the nucleus. It localises to the cytoplasm. It is found in the melanosome. Its subcellular location is the cell projection. The protein resides in the lamellipodium. The protein localises to the ruffle. In terms of biological role, calcium-sensitive protein which reversibly blocks the barbed ends of actin filaments but does not sever preformed actin filaments. May play an important role in macrophage function. May play a role in regulating cytoplasmic and/or nuclear structures through potential interactions with actin. May bind DNA. Uncapping occurs either when Ca(2+) falls or when the concentration of polyphosphoinositide rises, both at low and high Ca(2+). The polypeptide is Macrophage-capping protein (Capg) (Mus musculus (Mouse)).